The chain runs to 951 residues: Coiled-coil and C2 domain-containing protein 1A (951 aa).

Disordered stretches follow at residues 80–139 (CMRD…LETT), 185–266 (AIDE…RQRD), 306–346 (VDLS…PPPR), and 437–491 (NQDE…TRAQ). A compositionally biased stretch (acidic residues) spans 84 to 104 (PDEDEEEGTDEDDLEADDDLL). Residues T92, T204, and T206 each carry the phosphothreonine modification. Residues 201–210 (PASTPTYSPA) show a composition bias toward low complexity. S208 is modified (phosphoserine; by CDK1). A phosphoserine mark is found at S253 and S324. Over residues 311 to 333 (LPPPPDQLPPDPPSPPSQPPTPA) the composition is skewed to pro residues. Residues 346 to 392 (RTLLEALEQRMERYQVAAAQAKSKGDQRKARMHERIVKQYQDAIRAH) are a coiled coil. S455 is modified (phosphoserine). Residues 475-488 (SAPTAKAPPKATST) are compositionally biased toward low complexity. The stretch at 484-517 (KATSTRAQQQLAFLEGRKKQLLQAALRAKQKNDV) forms a coiled coil. Positions 637–771 (RFEQRTFSVI…EIACEVREIL (135 aa)) constitute a C2 domain. A disordered region spans residues 818 to 841 (TQVAGPKGKAPPVPAPARESGNRS).

It belongs to the CC2D1 family. In terms of processing, phosphorylation on Ser-208 by CDK1 promotes spindle pole localization and association with SCC1/RAD21.

The protein localises to the cytoplasm. Its subcellular location is the nucleus. It is found in the cytoskeleton. The protein resides in the microtubule organizing center. It localises to the centrosome. Transcription factor that binds specifically to the DRE (dual repressor element) and represses HTR1A gene transcription in neuronal cells. The combination of calcium and ATP specifically inactivates the binding with FRE. May play a role in the altered regulation of HTR1A associated with anxiety and major depression. Mediates HDAC-independent repression of HTR1A promoter in neuronal cell. Performs essential function in controlling functional maturation of synapses. Plays distinct roles depending on its localization. When cytoplasmic, acts as a scaffold protein in the PI3K/PDK1/AKT pathway. Repressor of HTR1A when nuclear. In the centrosome, regulates spindle pole localization of the cohesin subunit SCC1/RAD21, thereby mediating centriole cohesion during mitosis. This chain is Coiled-coil and C2 domain-containing protein 1A (CC2D1A), found in Homo sapiens (Human).